Consider the following 200-residue polypeptide: NADH-quinone oxidoreductase subunit C (200 aa).

This sequence belongs to the complex I 30 kDa subunit family. NDH-1 is composed of 14 different subunits. Subunits NuoB, C, D, E, F, and G constitute the peripheral sector of the complex.

The protein localises to the cell inner membrane. The catalysed reaction is a quinone + NADH + 5 H(+)(in) = a quinol + NAD(+) + 4 H(+)(out). Functionally, NDH-1 shuttles electrons from NADH, via FMN and iron-sulfur (Fe-S) centers, to quinones in the respiratory chain. The immediate electron acceptor for the enzyme in this species is believed to be ubiquinone. Couples the redox reaction to proton translocation (for every two electrons transferred, four hydrogen ions are translocated across the cytoplasmic membrane), and thus conserves the redox energy in a proton gradient. This is NADH-quinone oxidoreductase subunit C from Cereibacter sphaeroides (strain ATCC 17029 / ATH 2.4.9) (Rhodobacter sphaeroides).